The primary structure comprises 170 residues: MTGNDIVVLGRLADPYGIQGWLWLYPFGDDPLAWAEMPVWWIAREGEPWRECRLKSLKAHGNGVVVLLDGVADRTAAESMKGVLVGAPREALPTTEKNEFYWTDLIGLDVINTADERIGKVVGLIETGANSVLRVMGDDKVERLLPFVSAVVLAVEKEAGQIRVEWGSDW.

One can recognise a PRC barrel domain in the interval Lys-97 to Trp-170.

Belongs to the RimM family. Binds ribosomal protein uS19.

It is found in the cytoplasm. Its function is as follows. An accessory protein needed during the final step in the assembly of 30S ribosomal subunit, possibly for assembly of the head region. Essential for efficient processing of 16S rRNA. May be needed both before and after RbfA during the maturation of 16S rRNA. It has affinity for free ribosomal 30S subunits but not for 70S ribosomes. The sequence is that of Ribosome maturation factor RimM from Dechloromonas aromatica (strain RCB).